Consider the following 239-residue polypeptide: Ubiquinone biosynthesis O-methyltransferase (239 aa).

Residues R44, G63, D84, and M128 each contribute to the S-adenosyl-L-methionine site.

The protein belongs to the methyltransferase superfamily. UbiG/COQ3 family.

The catalysed reaction is a 3-demethylubiquinol + S-adenosyl-L-methionine = a ubiquinol + S-adenosyl-L-homocysteine + H(+). The enzyme catalyses a 3-(all-trans-polyprenyl)benzene-1,2-diol + S-adenosyl-L-methionine = a 2-methoxy-6-(all-trans-polyprenyl)phenol + S-adenosyl-L-homocysteine + H(+). The protein operates within cofactor biosynthesis; ubiquinone biosynthesis. O-methyltransferase that catalyzes the 2 O-methylation steps in the ubiquinone biosynthetic pathway. The protein is Ubiquinone biosynthesis O-methyltransferase of Xanthomonas axonopodis pv. citri (strain 306).